The chain runs to 174 residues: Achaete-scute homolog 3 (174 aa).

Residues alanine 92–valine 105 form a basic motif region. Residues alanine 92–leucine 144 form the bHLH domain. The tract at residues lysine 106–leucine 144 is helix-loop-helix motif. Residues serine 153–isoleucine 174 form a disordered region.

Efficient DNA binding requires dimerization with another bHLH protein. In terms of tissue distribution, expressed in the salivary duct cells. Also expressed at lower levels in testis and epididymis. Expressed in the olfactory epithelium (OE), in a subset of apical microvillar cells.

Its subcellular location is the nucleus. Functionally, transcriptional repressor. Inhibits myogenesis. Plays a role in progenitor cells which differentiate into ductal and acinar, but not myoepithelial, cell lineages in the salivary glands. Involved in the functions of the microvillar cells and Bowman's glands and probably, in a non-cell-autonomous manner, in the development or regeneration of a complete olfactory epithelium (OE). The polypeptide is Achaete-scute homolog 3 (Ascl3) (Mus musculus (Mouse)).